Reading from the N-terminus, the 354-residue chain is MKYPLDCEENFEKSFLFWLAKYVKFKLNSLSNKELKNPQALAEVNFALTKGVKNIDELDALAKKARNAGLSGVNTYFNPLKKVFEYLNFYKLYSLKQIDEELIVEVLASITGALSDASKKNYRIAVINFFDFLDKQNEEDEKAHIFDINLKNWAGIAGSKGVKLPEFMSKEELKKFLDAIENADFKNNTIRNKLIIKIIIFTGIRVSEAINIKMGDISEENDLYIIRIRAKGNKYRVVMIKKELIYDLLKNVSINYISKDALLFVNKKGTPLTQSYVSRIVEQLLFRAGIRKQKNGAHMLRHTFATLLYKKQKDLVLVQEALGHASLNTSRIYTHFDNDKLKLAAQVAKELSDS.

One can recognise a Core-binding (CB) domain in the interval 48 to 134; that stretch reads LTKGVKNIDE…AVINFFDFLD (87 aa). The region spanning 163–346 is the Tyr recombinase domain; the sequence is KLPEFMSKEE…DNDKLKLAAQ (184 aa). Active-site residues include arginine 205, lysine 231, histidine 298, arginine 301, and histidine 324. Tyrosine 333 serves as the catalytic O-(3'-phospho-DNA)-tyrosine intermediate.

It belongs to the 'phage' integrase family. XerH subfamily.

It is found in the cytoplasm. FtsK is required for efficient recombination. Functionally, site-specific tyrosine recombinase, which acts by catalyzing the cutting and rejoining of the recombining DNA molecules. Binds to the complete atypical dif motif (difH) site and to both halves separately. The polypeptide is Tyrosine recombinase XerH (Campylobacter jejuni subsp. jejuni serotype O:2 (strain ATCC 700819 / NCTC 11168)).